The sequence spans 139 residues: Transcription antitermination protein NusB (139 aa).

This sequence belongs to the NusB family.

Involved in transcription antitermination. Required for transcription of ribosomal RNA (rRNA) genes. Binds specifically to the boxA antiterminator sequence of the ribosomal RNA (rrn) operons. This is Transcription antitermination protein NusB from Pectobacterium carotovorum subsp. carotovorum (strain PC1).